Consider the following 226-residue polypeptide: UPF0319 protein SO_1816 (226 aa).

The signal sequence occupies residues 1–21; it reads MKSLLPISSLLVLLGSASVSA.

The protein belongs to the UPF0319 family.

In Shewanella oneidensis (strain ATCC 700550 / JCM 31522 / CIP 106686 / LMG 19005 / NCIMB 14063 / MR-1), this protein is UPF0319 protein SO_1816.